A 244-amino-acid polypeptide reads, in one-letter code: Carboxy-S-adenosyl-L-methionine synthase (244 aa).

S-adenosyl-L-methionine is bound by residues Y41, 66 to 68, N134, and R201; that span reads GCS.

It belongs to the class I-like SAM-binding methyltransferase superfamily. Cx-SAM synthase family. Homodimer.

It catalyses the reaction prephenate + S-adenosyl-L-methionine = carboxy-S-adenosyl-L-methionine + 3-phenylpyruvate + H2O. Its function is as follows. Catalyzes the conversion of S-adenosyl-L-methionine (SAM) to carboxy-S-adenosyl-L-methionine (Cx-SAM). The sequence is that of Carboxy-S-adenosyl-L-methionine synthase from Cellvibrio japonicus (strain Ueda107) (Pseudomonas fluorescens subsp. cellulosa).